A 195-amino-acid polypeptide reads, in one-letter code: Imidazoleglycerol-phosphate dehydratase (195 aa).

The protein belongs to the imidazoleglycerol-phosphate dehydratase family.

It localises to the cytoplasm. It catalyses the reaction D-erythro-1-(imidazol-4-yl)glycerol 3-phosphate = 3-(imidazol-4-yl)-2-oxopropyl phosphate + H2O. It participates in amino-acid biosynthesis; L-histidine biosynthesis; L-histidine from 5-phospho-alpha-D-ribose 1-diphosphate: step 6/9. The sequence is that of Imidazoleglycerol-phosphate dehydratase from Azoarcus sp. (strain BH72).